The following is a 231-amino-acid chain: uncharacterized protein (231 aa).

Helical transmembrane passes span 6 to 26 (IKLIFIVCSTVIVTGVLYKYI), 39 to 59 (NIVSFYALLLLLFSIIYSTFS), and 66 to 86 (FCFQLAMWAVIFLVIITGYAF).

It localises to the cell membrane. This is an uncharacterized protein from Rickettsia prowazekii (strain Madrid E).